Consider the following 176-residue polypeptide: ATP synthase subunit b (176 aa).

The chain crosses the membrane as a helical span at residues 27–47 (FFVFSFLTLILVVTIVTLLVY).

Belongs to the ATPase B chain family. F-type ATPases have 2 components, F(1) - the catalytic core - and F(0) - the membrane proton channel. F(1) has five subunits: alpha(3), beta(3), gamma(1), delta(1), epsilon(1). F(0) has three main subunits: a(1), b(2) and c(10-14). The alpha and beta chains form an alternating ring which encloses part of the gamma chain. F(1) is attached to F(0) by a central stalk formed by the gamma and epsilon chains, while a peripheral stalk is formed by the delta and b chains.

It localises to the cell membrane. Functionally, f(1)F(0) ATP synthase produces ATP from ADP in the presence of a proton or sodium gradient. F-type ATPases consist of two structural domains, F(1) containing the extramembraneous catalytic core and F(0) containing the membrane proton channel, linked together by a central stalk and a peripheral stalk. During catalysis, ATP synthesis in the catalytic domain of F(1) is coupled via a rotary mechanism of the central stalk subunits to proton translocation. Its function is as follows. Component of the F(0) channel, it forms part of the peripheral stalk, linking F(1) to F(0). The chain is ATP synthase subunit b from Metamycoplasma arthritidis (strain 158L3-1) (Mycoplasma arthritidis).